The following is a 475-amino-acid chain: Bifunctional protein HldE (475 aa).

Residues 1–321 (MADKIDISLY…RALHQITASH (321 aa)) form a ribokinase region. 197-200 (NLKE) is an ATP binding site. Asp-266 is a catalytic residue. Residues 346-475 (MTNGCFDILH…TSRLVEKMLN (130 aa)) are cytidylyltransferase.

In the N-terminal section; belongs to the carbohydrate kinase PfkB family. This sequence in the C-terminal section; belongs to the cytidylyltransferase family. As to quaternary structure, homodimer.

The enzyme catalyses D-glycero-beta-D-manno-heptose 7-phosphate + ATP = D-glycero-beta-D-manno-heptose 1,7-bisphosphate + ADP + H(+). The catalysed reaction is D-glycero-beta-D-manno-heptose 1-phosphate + ATP + H(+) = ADP-D-glycero-beta-D-manno-heptose + diphosphate. Its pathway is nucleotide-sugar biosynthesis; ADP-L-glycero-beta-D-manno-heptose biosynthesis; ADP-L-glycero-beta-D-manno-heptose from D-glycero-beta-D-manno-heptose 7-phosphate: step 1/4. It participates in nucleotide-sugar biosynthesis; ADP-L-glycero-beta-D-manno-heptose biosynthesis; ADP-L-glycero-beta-D-manno-heptose from D-glycero-beta-D-manno-heptose 7-phosphate: step 3/4. In terms of biological role, catalyzes the phosphorylation of D-glycero-D-manno-heptose 7-phosphate at the C-1 position to selectively form D-glycero-beta-D-manno-heptose-1,7-bisphosphate. Its function is as follows. Catalyzes the ADP transfer from ATP to D-glycero-beta-D-manno-heptose 1-phosphate, yielding ADP-D-glycero-beta-D-manno-heptose. This Coxiella burnetii (strain Dugway 5J108-111) protein is Bifunctional protein HldE.